Here is a 373-residue protein sequence, read N- to C-terminus: 3-dehydroquinate synthase (373 aa).

NAD(+)-binding positions include 67–72 (EGEETK), 101–105 (GVILD), 125–126 (TT), K138, and K147. Positions 180, 240, and 256 each coordinate Zn(2+).

It belongs to the sugar phosphate cyclases superfamily. Dehydroquinate synthase family. NAD(+) serves as cofactor. Requires Co(2+) as cofactor. It depends on Zn(2+) as a cofactor.

The protein localises to the cytoplasm. The catalysed reaction is 7-phospho-2-dehydro-3-deoxy-D-arabino-heptonate = 3-dehydroquinate + phosphate. It functions in the pathway metabolic intermediate biosynthesis; chorismate biosynthesis; chorismate from D-erythrose 4-phosphate and phosphoenolpyruvate: step 2/7. Catalyzes the conversion of 3-deoxy-D-arabino-heptulosonate 7-phosphate (DAHP) to dehydroquinate (DHQ). The sequence is that of 3-dehydroquinate synthase from Chlamydia trachomatis serovar A (strain ATCC VR-571B / DSM 19440 / HAR-13).